A 106-amino-acid chain; its full sequence is Integration host factor subunit beta (106 aa).

The disordered stretch occupies residues 57 to 106; the sequence is PARAGRNPRTGEHVPVEQKSVPFFKTGKEMRERLNRDGLDGATPPSPPAA. A compositionally biased stretch (basic and acidic residues) spans 82-95; that stretch reads TGKEMRERLNRDGL.

It belongs to the bacterial histone-like protein family. In terms of assembly, heterodimer of an alpha and a beta chain.

Functionally, this protein is one of the two subunits of integration host factor, a specific DNA-binding protein that functions in genetic recombination as well as in transcriptional and translational control. The protein is Integration host factor subunit beta of Afipia carboxidovorans (strain ATCC 49405 / DSM 1227 / KCTC 32145 / OM5) (Oligotropha carboxidovorans).